The sequence spans 339 residues: Basic membrane protein A (339 aa).

A signal peptide spans 1 to 17 (MNKILLLILLESIVFLS). Residue Cys-18 is the site of N-palmitoyl cysteine attachment. The S-diacylglycerol cysteine moiety is linked to residue Cys-18.

This sequence belongs to the BMP lipoprotein family. In terms of assembly, monomer.

It is found in the cell inner membrane. In terms of biological role, immunogenic protein. May be part of an ABC-type nucleoside uptake system involved in the purine salvage pathway. In Borreliella burgdorferi (strain ATCC 35210 / DSM 4680 / CIP 102532 / B31) (Borrelia burgdorferi), this protein is Basic membrane protein A (bmpA).